The primary structure comprises 425 residues: Adenylosuccinate synthetase (425 aa).

GTP is bound by residues 12–18 (GDEGKGK) and 40–42 (GHT). Aspartate 13 acts as the Proton acceptor in catalysis. Residues aspartate 13 and glycine 40 each contribute to the Mg(2+) site. Residues 13-16 (DEGK), 38-41 (NAGH), threonine 126, arginine 140, glutamine 221, threonine 236, and arginine 300 contribute to the IMP site. Residue histidine 41 is the Proton donor of the active site. 296-302 (ATTGRPR) is a binding site for substrate. GTP contacts are provided by residues arginine 302, 328 to 330 (KLD), and 410 to 412 (STG).

Belongs to the adenylosuccinate synthetase family. As to quaternary structure, homodimer. Mg(2+) is required as a cofactor.

It is found in the cytoplasm. It catalyses the reaction IMP + L-aspartate + GTP = N(6)-(1,2-dicarboxyethyl)-AMP + GDP + phosphate + 2 H(+). The protein operates within purine metabolism; AMP biosynthesis via de novo pathway; AMP from IMP: step 1/2. Its function is as follows. Plays an important role in the de novo pathway of purine nucleotide biosynthesis. Catalyzes the first committed step in the biosynthesis of AMP from IMP. This Thermodesulfovibrio yellowstonii (strain ATCC 51303 / DSM 11347 / YP87) protein is Adenylosuccinate synthetase.